The primary structure comprises 612 residues: Phosphomethylpyrimidine synthase (612 aa).

Disordered regions lie at residues 1-33 (MTIK…TEAG) and 105-146 (AGRP…RDGN). Residues 12 to 24 (TQNTAQADTAENT) show a composition bias toward low complexity. Over residues 105–117 (AGRPVRPEDDGIK) the composition is skewed to basic and acidic residues. Substrate is bound by residues N213, M242, Y271, H307, 327–329 (SRG), 368–371 (DGLR), and E407. H411 serves as a coordination point for Zn(2+). Residue Y434 participates in substrate binding. Residue H475 participates in Zn(2+) binding. The [4Fe-4S] cluster site is built by C555, C558, and C563.

This sequence belongs to the ThiC family. Requires [4Fe-4S] cluster as cofactor.

The catalysed reaction is 5-amino-1-(5-phospho-beta-D-ribosyl)imidazole + S-adenosyl-L-methionine = 4-amino-2-methyl-5-(phosphooxymethyl)pyrimidine + CO + 5'-deoxyadenosine + formate + L-methionine + 3 H(+). Its pathway is cofactor biosynthesis; thiamine diphosphate biosynthesis. Functionally, catalyzes the synthesis of the hydroxymethylpyrimidine phosphate (HMP-P) moiety of thiamine from aminoimidazole ribotide (AIR) in a radical S-adenosyl-L-methionine (SAM)-dependent reaction. This Streptomyces coelicolor (strain ATCC BAA-471 / A3(2) / M145) protein is Phosphomethylpyrimidine synthase.